The chain runs to 465 residues: ATP-dependent protease ATPase subunit HslU (465 aa).

ATP-binding positions include Val-19, 61-66 (GVGKTE), Asp-277, Glu-343, and Arg-415.

The protein belongs to the ClpX chaperone family. HslU subfamily. As to quaternary structure, a double ring-shaped homohexamer of HslV is capped on each side by a ring-shaped HslU homohexamer. The assembly of the HslU/HslV complex is dependent on binding of ATP.

Its subcellular location is the cytoplasm. Its function is as follows. ATPase subunit of a proteasome-like degradation complex; this subunit has chaperone activity. The binding of ATP and its subsequent hydrolysis by HslU are essential for unfolding of protein substrates subsequently hydrolyzed by HslV. HslU recognizes the N-terminal part of its protein substrates and unfolds these before they are guided to HslV for hydrolysis. In Geobacillus sp. (strain WCH70), this protein is ATP-dependent protease ATPase subunit HslU.